The sequence spans 193 residues: uncharacterized protein (193 aa).

A run of 3 helical transmembrane segments spans residues 5–25, 63–83, and 90–110; these read LILLIVVLFLTPYLIALFIIF, IFILIVEIIALCSGFYILINI, and ILTFSLIFLFIAIIYDKLTPA.

Its subcellular location is the cell membrane. This is an uncharacterized protein from Methanocaldococcus jannaschii (strain ATCC 43067 / DSM 2661 / JAL-1 / JCM 10045 / NBRC 100440) (Methanococcus jannaschii).